The following is a 585-amino-acid chain: Suppressor of mec-8 and unc-52 protein homolog 2 (585 aa).

The span at 1–14 shows a compositional bias: basic residues; it reads MKPSKSHHKEKTAR. Disordered regions lie at residues 1–52 and 219–324; these read MKPS…SSFH and KKKK…PRDK. Residues 15–39 show a composition bias toward basic and acidic residues; that stretch reads RREEKLEESDNPKYRDRAKERRENQ. R-[ED] repeat units lie at residues 16–17, 29–30, 36–37, and 258–259; these read RE and RD. Residues 276–288 show a composition bias toward basic and acidic residues; that stretch reads LSTKQEEPPVART. R-[ED] repeat units lie at residues 322-323, 436-437, 445-446, 450-451, 540-541, and 542-543; these read RD and RE. A disordered region spans residues 523 to 585; it reads FQFGVKMQDG…EAQTPKRSKH (63 aa). Positions 530–548 are enriched in basic and acidic residues; sequence QDGRKTRKQNRDRDQKLNN. At Thr-579 the chain carries Phosphothreonine.

The protein belongs to the RED family. Component of the spliceosome. Interacts with SMU1. Highly expressed in seedlings at 7 days after germination, young flowers before anthesis and developing siliques. Expressed at lower levels in roots, expanding leaves, open flowers, dry seeds and inflorescences. Not detected in senescing leaves.

It is found in the nucleus. Its function is as follows. Auxiliary spliceosomal protein involved in splicing of specific pre-mRNAs that affect multiple aspects of development. The polypeptide is Suppressor of mec-8 and unc-52 protein homolog 2 (SMU2) (Arabidopsis thaliana (Mouse-ear cress)).